The sequence spans 90 residues: Acylphosphatase (90 aa).

Residues 3 to 90 enclose the Acylphosphatase-like domain; sequence AVHMNASGQV…FEGQDFIVKY (88 aa). Active-site residues include R18 and N36.

Belongs to the acylphosphatase family.

The enzyme catalyses an acyl phosphate + H2O = a carboxylate + phosphate + H(+). This is Acylphosphatase (acyP) from Pediococcus pentosaceus (strain ATCC 25745 / CCUG 21536 / LMG 10740 / 183-1w).